We begin with the raw amino-acid sequence, 287 residues long: Pyridoxal kinase PdxY (287 aa).

Residues serine 10 and 45–46 (TQ) contribute to the substrate site. ATP contacts are provided by residues aspartate 112, alanine 144, glutamate 149, lysine 182, and 209–212 (RPLV). Aspartate 224 contacts substrate.

Belongs to the pyridoxine kinase family. PdxY subfamily. In terms of assembly, homodimer. Mg(2+) serves as cofactor.

It catalyses the reaction pyridoxal + ATP = pyridoxal 5'-phosphate + ADP + H(+). It participates in cofactor metabolism; pyridoxal 5'-phosphate salvage; pyridoxal 5'-phosphate from pyridoxal: step 1/1. In terms of biological role, pyridoxal kinase involved in the salvage pathway of pyridoxal 5'-phosphate (PLP). Catalyzes the phosphorylation of pyridoxal to PLP. This chain is Pyridoxal kinase PdxY, found in Shigella flexneri.